The primary structure comprises 573 residues: LysM domain-containing protein ARB_01155/01156 (573 aa).

An N-terminal signal peptide occupies residues 1-18 (MIPRNLISGLFLLPFVVA). Residues Asn46, Asn71, and Asn283 are each glycosylated (N-linked (GlcNAc...) asparagine). In terms of domain architecture, LysM spans 373-419 (RYYEVVAGDQCNTIALHFGITVDAFLSLNTQIDERCSNLWIAYAYCV). Residues 375–405 (YEVVAGDQCNTIALHFGITVDAFLSLNTQID) form a lysM domain region.

It is found in the secreted. In terms of biological role, might have a role in sequestration of chitin oligosaccharides (breakdown products of fungal cell walls that are released during invasion and act as triggers of host immunity) to dampen host defense. In Arthroderma benhamiae (strain ATCC MYA-4681 / CBS 112371) (Trichophyton mentagrophytes), this protein is LysM domain-containing protein ARB_01155/01156.